Consider the following 360-residue polypeptide: Phospho-N-acetylmuramoyl-pentapeptide-transferase (360 aa).

Transmembrane regions (helical) follow at residues 24–44 (RAVM…PWTI), 69–89 (GTPT…TLLW), 92–112 (WANP…ALGF), 133–153 (MVWQ…LAAN), 158–178 (ILIV…GFLV), 199–219 (GLAT…AYVS), 239–259 (VAIF…FNAY), 263–283 (VFMG…VAVI), 288–308 (FVLV…MLQV), and 337–357 (QVVV…LSTL).

Belongs to the glycosyltransferase 4 family. MraY subfamily. It depends on Mg(2+) as a cofactor.

The protein localises to the cell inner membrane. The catalysed reaction is UDP-N-acetyl-alpha-D-muramoyl-L-alanyl-gamma-D-glutamyl-meso-2,6-diaminopimeloyl-D-alanyl-D-alanine + di-trans,octa-cis-undecaprenyl phosphate = di-trans,octa-cis-undecaprenyl diphospho-N-acetyl-alpha-D-muramoyl-L-alanyl-D-glutamyl-meso-2,6-diaminopimeloyl-D-alanyl-D-alanine + UMP. It functions in the pathway cell wall biogenesis; peptidoglycan biosynthesis. Catalyzes the initial step of the lipid cycle reactions in the biosynthesis of the cell wall peptidoglycan: transfers peptidoglycan precursor phospho-MurNAc-pentapeptide from UDP-MurNAc-pentapeptide onto the lipid carrier undecaprenyl phosphate, yielding undecaprenyl-pyrophosphoryl-MurNAc-pentapeptide, known as lipid I. In Neisseria meningitidis serogroup C (strain 053442), this protein is Phospho-N-acetylmuramoyl-pentapeptide-transferase.